Here is a 170-residue protein sequence, read N- to C-terminus: Large ribosomal subunit protein uL11 (170 aa).

It belongs to the universal ribosomal protein uL11 family. In terms of assembly, part of the ribosomal stalk of the 50S ribosomal subunit. Interacts with L10 and the large rRNA to form the base of the stalk. L10 forms an elongated spine to which L12 dimers bind in a sequential fashion forming a multimeric L10(L12)X complex.

Forms part of the ribosomal stalk which helps the ribosome interact with GTP-bound translation factors. In Saccharolobus islandicus (strain Y.N.15.51 / Yellowstone #2) (Sulfolobus islandicus), this protein is Large ribosomal subunit protein uL11.